The primary structure comprises 379 residues: UDP-4-amino-4-deoxy-L-arabinose--oxoglutarate aminotransferase (379 aa).

The residue at position 182 (Lys-182) is an N6-(pyridoxal phosphate)lysine.

This sequence belongs to the DegT/DnrJ/EryC1 family. ArnB subfamily. In terms of assembly, homodimer. Pyridoxal 5'-phosphate is required as a cofactor.

The catalysed reaction is UDP-4-amino-4-deoxy-beta-L-arabinose + 2-oxoglutarate = UDP-beta-L-threo-pentopyranos-4-ulose + L-glutamate. It functions in the pathway nucleotide-sugar biosynthesis; UDP-4-deoxy-4-formamido-beta-L-arabinose biosynthesis; UDP-4-deoxy-4-formamido-beta-L-arabinose from UDP-alpha-D-glucuronate: step 2/3. It participates in bacterial outer membrane biogenesis; lipopolysaccharide biosynthesis. Catalyzes the conversion of UDP-4-keto-arabinose (UDP-Ara4O) to UDP-4-amino-4-deoxy-L-arabinose (UDP-L-Ara4N). The modified arabinose is attached to lipid A and is required for resistance to polymyxin and cationic antimicrobial peptides. The chain is UDP-4-amino-4-deoxy-L-arabinose--oxoglutarate aminotransferase from Shigella flexneri.